A 561-amino-acid chain; its full sequence is Dihydroxy-acid dehydratase (561 aa).

Cys-51 contacts [2Fe-2S] cluster. Position 83 (Asp-83) interacts with Mg(2+). Cys-124 serves as a coordination point for [2Fe-2S] cluster. Mg(2+) is bound by residues Asp-125 and Lys-126. Lys-126 carries the post-translational modification N6-carboxylysine. [2Fe-2S] cluster is bound at residue Cys-196. Glu-447 is a binding site for Mg(2+). Ser-473 functions as the Proton acceptor in the catalytic mechanism.

Belongs to the IlvD/Edd family. As to quaternary structure, homodimer. The cofactor is [2Fe-2S] cluster. Requires Mg(2+) as cofactor.

It carries out the reaction (2R)-2,3-dihydroxy-3-methylbutanoate = 3-methyl-2-oxobutanoate + H2O. It catalyses the reaction (2R,3R)-2,3-dihydroxy-3-methylpentanoate = (S)-3-methyl-2-oxopentanoate + H2O. The protein operates within amino-acid biosynthesis; L-isoleucine biosynthesis; L-isoleucine from 2-oxobutanoate: step 3/4. It participates in amino-acid biosynthesis; L-valine biosynthesis; L-valine from pyruvate: step 3/4. Functionally, functions in the biosynthesis of branched-chain amino acids. Catalyzes the dehydration of (2R,3R)-2,3-dihydroxy-3-methylpentanoate (2,3-dihydroxy-3-methylvalerate) into 2-oxo-3-methylpentanoate (2-oxo-3-methylvalerate) and of (2R)-2,3-dihydroxy-3-methylbutanoate (2,3-dihydroxyisovalerate) into 2-oxo-3-methylbutanoate (2-oxoisovalerate), the penultimate precursor to L-isoleucine and L-valine, respectively. The sequence is that of Dihydroxy-acid dehydratase from Oceanobacillus iheyensis (strain DSM 14371 / CIP 107618 / JCM 11309 / KCTC 3954 / HTE831).